The following is a 151-amino-acid chain: MARLHSGKRGSSGSTKPLRTEVPEWVSMSAEEVQAKIVEMAKDGNQSAIIGNILRDMYGIPNVKLVTGKSVSSIMKDAGFYSEVPEDLFNLMKKAINLRNHLENNPRDIHSKVGLNLIESKIRRLVKYYKGTKVLPATWRYSPQTARLLVE.

The disordered stretch occupies residues 1–20 (MARLHSGKRGSSGSTKPLRT).

This sequence belongs to the universal ribosomal protein uS15 family. In terms of assembly, part of the 30S ribosomal subunit.

The chain is Small ribosomal subunit protein uS15 from Methanococcus vannielii (strain ATCC 35089 / DSM 1224 / JCM 13029 / OCM 148 / SB).